Reading from the N-terminus, the 286-residue chain is Single myb histone 5 (286 aa).

Residues 1-61 (MGAPKQRWTS…KWRNMNVIVT (61 aa)) enclose the HTH myb-type domain. The H-T-H motif DNA-binding region spans 28–57 (WRMILNDPELSSTLRYRSNVDLKDKWRNMN). The H15 domain maps to 122–190 (SHSRLDNIIM…KVNRKYRIAP (69 aa)). The stretch at 229-277 (EAAAAAAAHAVAEAEAIMAEAEAAAREAEAAEAEARAAQAFAEAAVLTL) forms a coiled coil.

This sequence belongs to the histone H1/H5 family. SMH subfamily. As to quaternary structure, forms a homodimer and heterodimers.

It localises to the nucleus. Its subcellular location is the chromosome. The protein localises to the nucleolus. The protein resides in the telomere. Binds preferentially double-stranded telomeric repeats, but may also bind to the single telomeric strand. The protein is Single myb histone 5 (SMH5) of Zea mays (Maize).